We begin with the raw amino-acid sequence, 519 residues long: Glutamate--cysteine ligase (519 aa).

This sequence belongs to the glutamate--cysteine ligase type 1 family. Type 1 subfamily.

The catalysed reaction is L-cysteine + L-glutamate + ATP = gamma-L-glutamyl-L-cysteine + ADP + phosphate + H(+). It participates in sulfur metabolism; glutathione biosynthesis; glutathione from L-cysteine and L-glutamate: step 1/2. This chain is Glutamate--cysteine ligase, found in Yersinia enterocolitica serotype O:8 / biotype 1B (strain NCTC 13174 / 8081).